A 195-amino-acid polypeptide reads, in one-letter code: dITP/XTP pyrophosphatase (195 aa).

8–13 (TNNQGK) serves as a coordination point for substrate. Mg(2+) is bound by residues E39 and D68. The Proton acceptor role is filled by D68. Residues S69, 149–152 (FGYD), K172, and 177–178 (HR) contribute to the substrate site.

It belongs to the HAM1 NTPase family. Homodimer. The cofactor is Mg(2+).

It catalyses the reaction XTP + H2O = XMP + diphosphate + H(+). The catalysed reaction is dITP + H2O = dIMP + diphosphate + H(+). The enzyme catalyses ITP + H2O = IMP + diphosphate + H(+). In terms of biological role, pyrophosphatase that catalyzes the hydrolysis of nucleoside triphosphates to their monophosphate derivatives, with a high preference for the non-canonical purine nucleotides XTP (xanthosine triphosphate), dITP (deoxyinosine triphosphate) and ITP. Seems to function as a house-cleaning enzyme that removes non-canonical purine nucleotides from the nucleotide pool, thus preventing their incorporation into DNA/RNA and avoiding chromosomal lesions. This chain is dITP/XTP pyrophosphatase, found in Staphylococcus epidermidis (strain ATCC 12228 / FDA PCI 1200).